Consider the following 460-residue polypeptide: MPKEYTSVSKISGPLVLVENIENVKYGEVVEVKLANGEIRQGQVLEAQEGAALVQMFASTQDLSLKGMRIKFLGHVLEINLSPEILGRTFDGLGRPRDGGPEIIPQKRMDINGSPINPYSRAYPQEFIQTGISAIDGMNTIVRGQKIPIFSGAGLPHATLAAQIARQARLLNEEEKFAVVFGAMGITFEEANFFIENFRSTGALERTVLFINLANDPVIERIATPRFALTAAEYLAFDLDMHVLVILSDMTNYAEALREVSASRKEVPGRRGYPGYLYTDLATLYERAGRIKGKKGSITLLPILTMPEDDRTHPIPDLTGYITEGQIFLSRELHRRGIYPPIDVLQSLSRLMRGGIGEGRTRKDHGDLSNQLYAAYSRGLEAKELAVVLGEAALTEEDVQFLEFAEAFEMEFIKQGEYENRSIFETLNLGWKLLRRLPRASLKRIRPEYLDEFWGKEDAS.

It belongs to the ATPase alpha/beta chains family.

Produces ATP from ADP in the presence of a proton gradient across the membrane. The V-type beta chain is a regulatory subunit. The protein is V-type ATP synthase beta chain of Dictyoglomus turgidum (strain DSM 6724 / Z-1310).